Consider the following 210-residue polypeptide: Insulin receptor (210 aa).

The region spanning 1-96 is the Fibronectin type-III domain; sequence VSNSSSQIIL…SQILKELEES (96 aa). N3, N21, and N68 each carry an N-linked (GlcNAc...) asparagine glycan. Residues 55-78 form a disordered region; that stretch reads WSPPFESEDSQKHNQSEYEDSAGE. Positions 103-111 are insulin-binding; sequence EDYLHNVVF. The disordered stretch occupies residues 116–169; that stretch reads TSSGTGAEDPRPSRKRRSLGDVGNVTVAVPTVAAFPNTSSTSTPTSPEEHRPFE. Topologically, residues 133–210 are extracellular; sequence SLGDVGNVTV…EERCSVAAYV (78 aa). The span at 137-161 shows a compositional bias: low complexity; sequence VGNVTVAVPTVAAFPNTSSTSTPTS. N-linked (GlcNAc...) asparagine glycans are attached at residues N139 and N152. A disulfide bridge connects residues C195 and C204.

This sequence belongs to the protein kinase superfamily. Tyr protein kinase family. Insulin receptor subfamily. In terms of assembly, tetramer of 2 alpha and 2 beta chains linked by disulfide bonds. The alpha chains carry the insulin-binding regions, while the beta chains carry the kinase domain. Forms a hybrid receptor with IGF1R, the hybrid is a tetramer consisting of 1 alpha chain and 1 beta chain of INSR and 1 alpha chain and 1 beta chain of IGF1R. Interacts with SORBS1 but dissociates from it following insulin stimulation. Binds SH2B2. Activated form of INSR interacts (via phosphorylated Tyrosine) with the PTB/PID domains of IRS1 and SHC1. The sequences surrounding the phosphorylated NPXY motif contribute differentially to either IRS1 or SHC1 recognition. Interacts (via tyrosines in the C-terminus) with IRS2 (via PTB domain and 591-786 AA); the 591-786 would be the primary anchor of IRS2 to INSR while the PTB domain would have a stabilizing action on the interaction with INSR. Interacts with the SH2 domains of the 85 kDa regulatory subunit of PI3K (PIK3R1) in vitro, when autophosphorylated on tyrosine residues. Interacts with SOCS7. Interacts with SOCS3. Interacts with SOCS1. Interacts with CAV2 (tyrosine-phosphorylated form); the interaction is increased with 'Tyr-27'phosphorylation of CAV2. Interacts with ARRB2. Interacts with GRB10; this interaction blocks the association between IRS1/IRS2 and INSR, significantly reduces insulin-stimulated tyrosine phosphorylation of IRS1 and IRS2 and thus decreases insulin signaling. Interacts with GRB7. Interacts with PDPK1. Interacts with GRB14 (via BPS domain). Interacts (via subunit alpha) with ENPP1 (via 485-599 AA); this interaction blocks autophosphorylation. Interacts with PTPRE. Interacts with STAT5B (via SH2 domain). Interacts with PTPRF. Interacts with ATIC; ATIC together with PRKAA2/AMPK2 and HACD3/PTPLAD1 is proposed to be part of a signaling netwok regulating INSR autophosphorylation and endocytosis. Interacts with the insulin receptor SORL1; this interaction strongly increases its surface exposure, hence strengthens insulin signal reception. Interacts (tyrosine phosphorylated) with CCDC88A/GIV (via SH2-like region); binding requires autophosphorylation of the INSR C-terminal region. Interacts with GNAI3; the interaction is probably mediated by CCDC88A/GIV. Interacts with LMBRD1. Interacts (in response to insulin stimulation) with NCK1; this interaction may recruit PTPN1 to mediate INSR dephosphorylation. Post-translationally, after being transported from the endoplasmic reticulum to the Golgi apparatus, the single glycosylated precursor is further glycosylated and then cleaved, followed by its transport to the plasma membrane. In terms of processing, autophosphorylated on tyrosine residues in response to insulin. Dephosphorylated by PTPN1, PTPRE and PTPRF. Dephosphorylated by PTPN2; down-regulates insulin-induced signaling. S-nitrosylation by BLVRB inhibits the receptor tyrosine kinase, thereby inhibiting insulin signaling.

Its subcellular location is the cell membrane. The protein localises to the late endosome. The protein resides in the lysosome. It carries out the reaction L-tyrosyl-[protein] + ATP = O-phospho-L-tyrosyl-[protein] + ADP + H(+). Its activity is regulated as follows. Activated in response to insulin. Autophosphorylation activates the kinase activity. PTPN1, PTPRE and PTPRF dephosphorylate important tyrosine residues, thereby reducing INSR activity. Inhibited by ENPP1. GRB10 and GRB14 inhibit the catalytic activity of the INSR, they block access of substrates to the activated receptor. SOCS1 and SOCS3 act as negative regulators of INSR activity, they bind to the activated INRS and interfere with the phosphorylation of INSR substrates. In terms of biological role, receptor tyrosine kinase which mediates the pleiotropic actions of insulin. Binding of insulin leads to phosphorylation of several intracellular substrates, including, insulin receptor substrates (IRS1, 2, 3, 4), SHC, GAB1, CBL and other signaling intermediates. Each of these phosphorylated proteins serve as docking proteins for other signaling proteins that contain Src-homology-2 domains (SH2 domain) that specifically recognize different phosphotyrosine residues, including the p85 regulatory subunit of PI3K and SHP2. Phosphorylation of IRSs proteins lead to the activation of two main signaling pathways: the PI3K-AKT/PKB pathway, which is responsible for most of the metabolic actions of insulin, and the Ras-MAPK pathway, which regulates expression of some genes and cooperates with the PI3K pathway to control cell growth and differentiation. Binding of the SH2 domains of PI3K to phosphotyrosines on IRS1 leads to the activation of PI3K and the generation of phosphatidylinositol-(3, 4, 5)-triphosphate (PIP3), a lipid second messenger, which activates several PIP3-dependent serine/threonine kinases, such as PDPK1 and subsequently AKT/PKB. The net effect of this pathway is to produce a translocation of the glucose transporter SLC2A4/GLUT4 from cytoplasmic vesicles to the cell membrane to facilitate glucose transport. Moreover, upon insulin stimulation, activated AKT/PKB is responsible for: anti-apoptotic effect of insulin by inducing phosphorylation of BAD; regulates the expression of gluconeogenic and lipogenic enzymes by controlling the activity of the winged helix or forkhead (FOX) class of transcription factors. Another pathway regulated by PI3K-AKT/PKB activation is mTORC1 signaling pathway which regulates cell growth and metabolism and integrates signals from insulin. AKT mediates insulin-stimulated protein synthesis by phosphorylating TSC2 thereby activating mTORC1 pathway. The Ras/RAF/MAP2K/MAPK pathway is mainly involved in mediating cell growth, survival and cellular differentiation of insulin. Phosphorylated IRS1 recruits GRB2/SOS complex, which triggers the activation of the Ras/RAF/MAP2K/MAPK pathway. In addition to binding insulin, the insulin receptor can bind insulin-like growth factors (IGFI and IGFII). When present in a hybrid receptor with IGF1R, binds IGF1. In adipocytes, inhibits lipolysis. The protein is Insulin receptor (INSR) of Macaca mulatta (Rhesus macaque).